The following is a 794-amino-acid chain: Zinc finger protein 148 (794 aa).

Lys6 is covalently cross-linked (Glycyl lysine isopeptide (Lys-Gly) (interchain with G-Cter in SUMO2)). Ser51 bears the Phosphoserine mark. Residues Lys88, Lys115, and Lys132 each participate in a glycyl lysine isopeptide (Lys-Gly) (interchain with G-Cter in SUMO2) cross-link. A C2H2-type 1 zinc finger spans residues 171-193 (HVCEHCNAAFRTNYHLQRHVFIH). Thr194 is modified (phosphothreonine). C2H2-type zinc fingers lie at residues 199 to 221 (FQCS…EKIH) and 227 to 249 (FRCD…KRTH). Ser250 is modified (phosphoserine). The C2H2-type 4 zinc-finger motif lies at 255–278 (YQCEYCLQYFSRTDRVLKHKRMCH). Residue Lys291 forms a Glycyl lysine isopeptide (Lys-Gly) (interchain with G-Cter in SUMO2) linkage. The disordered stretch occupies residues 298-336 (EEDSGFSTSPKDNSLPKKKRQKTEKKSSGMDKESVLDKS). Residues Ser301 and Ser306 each carry the phosphoserine modification. Residue Lys308 forms a Glycyl lysine isopeptide (Lys-Gly) (interchain with G-Cter in SUMO2) linkage. The span at 321–336 (EKKSSGMDKESVLDKS) shows a compositional bias: basic and acidic residues. A Glycyl lysine isopeptide (Lys-Gly) (interchain with G-Cter in SUMO1); alternate cross-link involves residue Lys356. Residue Lys356 forms a Glycyl lysine isopeptide (Lys-Gly) (interchain with G-Cter in SUMO2); alternate linkage. Lys402 is covalently cross-linked (Glycyl lysine isopeptide (Lys-Gly) (interchain with G-Cter in SUMO2)). Ser412 is modified (phosphoserine). Glycyl lysine isopeptide (Lys-Gly) (interchain with G-Cter in SUMO2) cross-links involve residues Lys421 and Lys424. The segment covering 574–588 (NSSDVPEVTQSENVG) has biased composition (polar residues). The tract at residues 574–599 (NSSDVPEVTQSENVGSSSQASSSDKA) is disordered. Residue Lys607 is modified to N6-acetyllysine. Ser665 and Ser784 each carry phosphoserine.

It belongs to the krueppel C2H2-type zinc-finger protein family. Interacts with HNRNPDL. Interacts with the 5FMC complex; the interaction requires association with CHTOP. Interacts with CAVIN1. Post-translationally, sumoylated with SUMO2. Desumoylated by SENP3, resulting in the stimulation of transcription of its target genes. In terms of tissue distribution, strong expression detected in brain, lung, liver and kidney, with lower levels detected in spleen, skeletal muscle, testis and heart.

It localises to the nucleus. Involved in transcriptional regulation. Represses the transcription of a number of genes including gastrin, stromelysin and enolase. Binds to the G-rich box in the enhancer region of these genes. The protein is Zinc finger protein 148 (Znf148) of Mus musculus (Mouse).